The following is a 360-amino-acid chain: Peptide chain release factor 1 (360 aa).

Q235 carries the post-translational modification N5-methylglutamine. The tract at residues 284–313 (AKRQQAEASTRRNLLGSGDRSDRNRTYNFP) is disordered.

It belongs to the prokaryotic/mitochondrial release factor family. Post-translationally, methylated by PrmC. Methylation increases the termination efficiency of RF1.

It is found in the cytoplasm. Its function is as follows. Peptide chain release factor 1 directs the termination of translation in response to the peptide chain termination codons UAG and UAA. The polypeptide is Peptide chain release factor 1 (Salmonella agona (strain SL483)).